We begin with the raw amino-acid sequence, 142 residues long: Large ribosomal subunit protein uL13 (142 aa).

Belongs to the universal ribosomal protein uL13 family. Part of the 50S ribosomal subunit.

In terms of biological role, this protein is one of the early assembly proteins of the 50S ribosomal subunit, although it is not seen to bind rRNA by itself. It is important during the early stages of 50S assembly. The chain is Large ribosomal subunit protein uL13 from Vibrio atlanticus (strain LGP32) (Vibrio splendidus (strain Mel32)).